The following is a 161-amino-acid chain: PHD finger-containing protein 4 (161 aa).

The segment at 30–80 adopts a PHD-type zinc-finger fold; that stretch reads KKPCEVCGSNANDHAIMTCFLCRDTREHIYCARVHLRSVPRMWICEECRMN. Zn(2+)-binding residues include cysteine 33, cysteine 36, cysteine 48, cysteine 51, histidine 57, cysteine 60, cysteine 74, and cysteine 77. Residues 114–132 show a composition bias toward polar residues; sequence TMTSSDSGNQISATHQQPP. Residues 114–161 are disordered; it reads TMTSSDSGNQISATHQQPPQAHASPVAVPMDTSSSDNQQPPSDSESAI. The span at 146–161 shows a compositional bias: low complexity; the sequence is SSSDNQQPPSDSESAI.

In terms of assembly, interacts directly with AIPP3/BDT1.

In terms of biological role, together with AIPP3/BDT1, cooperates to form a BAH-PHD bivalent histone reader complex able to read histone H3 lysine 27 trimethylation (H3K27me3) histone marks in order to regulate transcription, especially to prevent early flowering; promotes AIPP3/BDT1 binding to H3K27me3. This Arabidopsis thaliana (Mouse-ear cress) protein is PHD finger-containing protein 4.